A 509-amino-acid polypeptide reads, in one-letter code: ATP synthase subunit alpha (509 aa).

171 to 178 (GDRKTGKT) is an ATP binding site.

The protein belongs to the ATPase alpha/beta chains family. F-type ATPases have 2 components, CF(1) - the catalytic core - and CF(0) - the membrane proton channel. CF(1) has five subunits: alpha(3), beta(3), gamma(1), delta(1), epsilon(1). CF(0) has three main subunits: a(1), b(2) and c(9-12). The alpha and beta chains form an alternating ring which encloses part of the gamma chain. CF(1) is attached to CF(0) by a central stalk formed by the gamma and epsilon chains, while a peripheral stalk is formed by the delta and b chains.

It is found in the cell inner membrane. It carries out the reaction ATP + H2O + 4 H(+)(in) = ADP + phosphate + 5 H(+)(out). In terms of biological role, produces ATP from ADP in the presence of a proton gradient across the membrane. The alpha chain is a regulatory subunit. The sequence is that of ATP synthase subunit alpha from Ehrlichia canis (strain Jake).